Consider the following 161-residue polypeptide: Cell division protein SepF 2 (161 aa).

The disordered stretch occupies residues 19 to 47 (EDSEKAPELSSSRETKTKNQNQSKSLLRS). Residues 21–35 (SEKAPELSSSRETKT) are compositionally biased toward basic and acidic residues.

It belongs to the SepF family. In terms of assembly, homodimer. Interacts with FtsZ.

It localises to the cytoplasm. Its function is as follows. Cell division protein that is part of the divisome complex and is recruited early to the Z-ring. Probably stimulates Z-ring formation, perhaps through the cross-linking of FtsZ protofilaments. Its function overlaps with FtsA. The protein is Cell division protein SepF 2 of Desulforamulus reducens (strain ATCC BAA-1160 / DSM 100696 / MI-1) (Desulfotomaculum reducens).